A 454-amino-acid chain; its full sequence is Bifunctional protein GlmU (454 aa).

Residues 1–226 are pyrophosphorylase; the sequence is MSLDIVILAA…AMEVQGANDR (226 aa). UDP-N-acetyl-alpha-D-glucosamine contacts are provided by residues 8-11, Lys22, Gln73, 78-79, 99-101, Gly136, Glu151, Asn166, and Asn224; these read LAAG, GT, and YGD. Asp101 contributes to the Mg(2+) binding site. Residue Asn224 coordinates Mg(2+). The segment at 227–247 is linker; sequence LQLAQLERHYQSRVARRLMAQ. The N-acetyltransferase stretch occupies residues 248-454; sequence GVTLRDPARF…GWQRPTKQKK (207 aa). UDP-N-acetyl-alpha-D-glucosamine is bound by residues Arg330 and Lys348. The active-site Proton acceptor is His360. UDP-N-acetyl-alpha-D-glucosamine is bound by residues Tyr363 and Asn374. Acetyl-CoA-binding positions include Ala377, 383–384, Ser402, Ala420, and Arg437; that span reads NY.

In the N-terminal section; belongs to the N-acetylglucosamine-1-phosphate uridyltransferase family. It in the C-terminal section; belongs to the transferase hexapeptide repeat family. As to quaternary structure, homotrimer. Mg(2+) is required as a cofactor.

The protein resides in the cytoplasm. It carries out the reaction alpha-D-glucosamine 1-phosphate + acetyl-CoA = N-acetyl-alpha-D-glucosamine 1-phosphate + CoA + H(+). The enzyme catalyses N-acetyl-alpha-D-glucosamine 1-phosphate + UTP + H(+) = UDP-N-acetyl-alpha-D-glucosamine + diphosphate. It participates in nucleotide-sugar biosynthesis; UDP-N-acetyl-alpha-D-glucosamine biosynthesis; N-acetyl-alpha-D-glucosamine 1-phosphate from alpha-D-glucosamine 6-phosphate (route II): step 2/2. It functions in the pathway nucleotide-sugar biosynthesis; UDP-N-acetyl-alpha-D-glucosamine biosynthesis; UDP-N-acetyl-alpha-D-glucosamine from N-acetyl-alpha-D-glucosamine 1-phosphate: step 1/1. The protein operates within bacterial outer membrane biogenesis; LPS lipid A biosynthesis. In terms of biological role, catalyzes the last two sequential reactions in the de novo biosynthetic pathway for UDP-N-acetylglucosamine (UDP-GlcNAc). The C-terminal domain catalyzes the transfer of acetyl group from acetyl coenzyme A to glucosamine-1-phosphate (GlcN-1-P) to produce N-acetylglucosamine-1-phosphate (GlcNAc-1-P), which is converted into UDP-GlcNAc by the transfer of uridine 5-monophosphate (from uridine 5-triphosphate), a reaction catalyzed by the N-terminal domain. The sequence is that of Bifunctional protein GlmU from Azotobacter vinelandii (strain DJ / ATCC BAA-1303).